Reading from the N-terminus, the 315-residue chain is Replication factor C small subunit (315 aa).

43 to 50 (GSPGVGKT) provides a ligand contact to ATP.

The protein belongs to the activator 1 small subunits family. RfcS subfamily. As to quaternary structure, heteromultimer composed of small subunits (RfcS) and large subunits (RfcL).

Its function is as follows. Part of the RFC clamp loader complex which loads the PCNA sliding clamp onto DNA. The sequence is that of Replication factor C small subunit from Methanococcus maripaludis (strain C7 / ATCC BAA-1331).